A 105-amino-acid polypeptide reads, in one-letter code: Nucleoid-associated protein Ccur92_18190 (105 aa).

This sequence belongs to the YbaB/EbfC family. Homodimer.

It localises to the cytoplasm. The protein localises to the nucleoid. Binds to DNA and alters its conformation. May be involved in regulation of gene expression, nucleoid organization and DNA protection. This chain is Nucleoid-associated protein Ccur92_18190, found in Campylobacter curvus (strain 525.92).